Consider the following 325-residue polypeptide: WUSCHEL-related homeobox 8 (325 aa).

A DNA-binding region (homeobox; WUS-type) is located at residues 51-115; it reads DPKPRWNPKP…NRKSRAKHKL (65 aa).

The protein belongs to the WUS homeobox family. Expressed only in the egg cell. Not detected in the pollen tube. Expressed in the zygote, the basal cell, and later the suspensor. Expressed in all suspensor cells, except the hypophysis, and in the embryo surrounding region (ESR) endosperm cells. Strongly expressed in the suspensor cells, with a weak expression also detected throughout the developing embryo.

It localises to the nucleus. Functionally, probable transcription factor, which may be involved in embryonic patterning. May be required for basal embryo development after fertilization. Acts partially redundantly with STIP in promoting embryonic cell division and proliferation. Promotes cotyledon boundary formation by maintaining the symmetry in CUC genes expression domains. The polypeptide is WUSCHEL-related homeobox 8 (Arabidopsis thaliana (Mouse-ear cress)).